A 1734-amino-acid polypeptide reads, in one-letter code: Complement C4-A (1734 aa).

Residues 1-19 form the signal peptide; the sequence is MRLLWGLAWVFSFCASSLQ. C66 and C95 are joined by a disulfide. N-linked (GlcNAc...) asparagine glycosylation is present at N224. An intrachain disulfide couples C633 to C667. The propeptide occupies 674 to 677; the sequence is RQKR. Cystine bridges form between C700–C726, C701–C733, and C714–C734. One can recognise an Anaphylatoxin-like domain in the interval 700 to 734; that stretch reads CCQDGMTKLPMKRTCEQRAARVPQQACREPFLSCC. Residues N743 and N859 are each glycosylated (N-linked (GlcNAc...) asparagine). Positions 1002–1005 form a cross-link, isoglutamyl cysteine thioester (Cys-Gln); sequence CAEQ. Residues N1128 and N1383 are each glycosylated (N-linked (GlcNAc...) asparagine). A Sulfotyrosine modification is found at Y1409. A propeptide spanning residues 1437–1443 is cleaved from the precursor; it reads RRSRRRR. 5 disulfide bridges follow: C1461–C1525, C1573–C1578, C1585–C1663, C1608–C1732, and C1708–C1717. Residues 1585–1732 form the NTR domain; the sequence is CPRLLRSLER…FLMEFSSRGC (148 aa).

In terms of assembly, in absence of complement activation, circulates in blood as a disulfide-linked trimer of an alpha, beta and gamma chain. Complement C4b is composed of Complement C4b-A, Complement C4 beta and Complement C4 gamma chains that are associated via disulfide bonds. Non-enzymatic component of the C3 convertase, also named C4bC2b, composed of the serine protease complement C2b (C2), as well as complement C4b. Non-enzymatic component of the C5 convertase, also named C4bC2bC3b, composed of the serine protease complement C2b (C2), complement C3b, as well as complement C4b. In terms of processing, prior to secretion, the single-chain precursor is enzymatically cleaved by plasminogen (PLG) to yield non-identical chains alpha, beta and gamma. During activation of the complement systems, the alpha chain is cleaved into C4a and C4b by different proteases depending on the complement pathway: C4b stays linked to the beta and gamma chains, while C4a is released in the plasma. The alpha chain is cleaved by C1S to generate C4a and C4b following activation by the classical complement system. The alpha chain is cleaved to generate C4a and C4b by MASP2 following activation by the lectin complement system. The alpha chain is cleaved by GZMK to generate C4a and C4b following activation by the GZMK complement system. Further degradation of C4b by C1 into the inactive fragments C4c and C4d blocks the generation of C3 convertase. The proteolytic cleavages often are incomplete so that many structural forms can be found in plasma. Post-translationally, upon activation, the internal thioester bond reacts with carbohydrate antigens on the target surface to form amide or ester bonds, leading to covalent association with the surface of pathogens. Complement C4b interacts with complement C3b via a thioester linkage. In terms of processing, N- and O-glycosylated. O-glycosylated with a core 1 or possibly core 8 glycan.

It is found in the secreted. Its subcellular location is the synapse. The protein localises to the cell projection. The protein resides in the axon. It localises to the dendrite. It is found in the cell surface. Specifically inhibited by nanobody hC4Nb8, inhibiting the classical complement pathway. Its function is as follows. Precursor of non-enzymatic components of the classical, lectin and GZMK complement pathways, which consist in a cascade of proteins that leads to phagocytosis and breakdown of pathogens and signaling that strengthens the adaptive immune system. Non-enzymatic component of C3 and C5 convertases. Generated following cleavage by complement proteases (C1S, MASP2 or GZMK, depending on the complement pathway), it covalently attaches to the surface of pathogens, where it acts as an opsonin that marks the surface of antigens for removal. It then recruits the serine protease complement C2b to form the C3 and C5 convertases, which cleave and activate C3 and C5, respectively, the next components of the complement pathways. Complement C4b-A isotype is responsible for effective binding to form amide bonds with immune aggregates or protein antigens, while complement C4b-B isotype catalyzes the transacylation of the thioester carbonyl group to form ester bonds with carbohydrate antigens. In terms of biological role, putative humoral mediator released following cleavage by complement proteases (C1S, MASP2 or GZMK, depending on the complement pathway). While it is strongly similar to anaphylatoxins, its role is unclear. Was reported to act as a mediator of local inflammatory process; however these effects were probably due to contamination with C3a and/C5a anaphylatoxins in biological assays. This Mus musculus (Mouse) protein is Complement C4-A.